The primary structure comprises 928 residues: Type II inositol 3,4-bisphosphate 4-phosphatase (928 aa).

A compositionally biased stretch (basic and acidic residues) spans 1-13 (MEIKEEGTSEEGQ). Disordered stretches follow at residues 1–23 (MEIK…QAND), 481–516 (ILRK…HHSD), and 548–575 (SRND…LTSH). The region spanning 23–165 (DPEDIQFTSI…LKSKEQLLSL (143 aa)) is the C2 domain. Composition is skewed to basic and acidic residues over residues 506-516 (RRQDSIPHHSD) and 548-563 (SRND…KDGD).

Belongs to the inositol 3,4-bisphosphate 4-phosphatase family.

It catalyses the reaction a 1,2-diacyl-sn-glycero-3-phospho-(1D-myo-inositol-3,4-bisphosphate) + H2O = a 1,2-diacyl-sn-glycero-3-phospho-(1D-myo-inositol-3-phosphate) + phosphate. The enzyme catalyses 1D-myo-inositol 3,4-bisphosphate + H2O = 1D-myo-inositol 3-phosphate + phosphate. The catalysed reaction is 1D-myo-inositol 1,3,4-trisphosphate + H2O = 1D-myo-inositol 1,3-bisphosphate + phosphate. It participates in signal transduction; phosphatidylinositol signaling pathway. Its activity is regulated as follows. Strongly inhibited by inositol hexakisphosphate. Catalyzes the hydrolysis of the 4-position phosphate of phosphatidylinositol 3,4-bisphosphate, inositol 1,3,4-trisphosphate and inositol 3,4-bisphosphate. Plays a role in the late stages of macropinocytosis by dephosphorylating phosphatidylinositol 3,4-bisphosphate in membrane ruffles. The lipid phosphatase activity is critical for tumor suppressor function. Antagonizes the PI3K-AKT/PKB signaling pathway by dephosphorylating phosphoinositides and thereby modulating cell cycle progression and cell survival. The chain is Type II inositol 3,4-bisphosphate 4-phosphatase (Inpp4b) from Rattus norvegicus (Rat).